A 1166-amino-acid polypeptide reads, in one-letter code: Pesticidal crystal protein Cry1Ga (1166 aa).

The protein belongs to the delta endotoxin family.

Its function is as follows. Promotes colloidosmotic lysis by binding to the midgut epithelial cells of insects. The sequence is that of Pesticidal crystal protein Cry1Ga (cry1Ga) from Bacillus thuringiensis.